A 451-amino-acid polypeptide reads, in one-letter code: MCIVSHRYIPLTEKDKQEMLQTIGAKSIGELFGDVPSDILLNRDLNIAEGEAETTLLRRLNRIASKNITKETHTSFLGAGVYDHYAPSVVDAMISRSEFYTAYTPYQPEISQGELQAIFEFQTLICELTDMDVANSSMYDGMTSFAEACILAFSQTKKNKIVVSKGLHYQALQVLHTYAKTRKEFEVVEIDLDGTVTDLKKLEAAVDDETAAVAVQYPNFYGSIEDLEKIHSFIEDKKALFIVYANPLALGLLTPPGSFGADIVVGDTQPFGIPAQFGGPHCGYFATTKKLMRKVPGRLVGQTQDDEGNRGFVLTLQAREQHIRRDKATSNICSNQALNALASSIAMSALGKQGIYDIAVQNIEHANYAKQQFIKKGFEVLDGTSFNEFVVKFDKPIQQVNEELVKYNIIGGFDLGVVSDDFKNHMLIAVTELRTKDEIDTFVEKAGELND.

It belongs to the GcvP family. N-terminal subunit subfamily. In terms of assembly, the glycine cleavage system is composed of four proteins: P, T, L and H. In this organism, the P 'protein' is a heterodimer of two subunits.

The enzyme catalyses N(6)-[(R)-lipoyl]-L-lysyl-[glycine-cleavage complex H protein] + glycine + H(+) = N(6)-[(R)-S(8)-aminomethyldihydrolipoyl]-L-lysyl-[glycine-cleavage complex H protein] + CO2. Functionally, the glycine cleavage system catalyzes the degradation of glycine. The P protein binds the alpha-amino group of glycine through its pyridoxal phosphate cofactor; CO(2) is released and the remaining methylamine moiety is then transferred to the lipoamide cofactor of the H protein. The protein is Probable glycine dehydrogenase (decarboxylating) subunit 1 of Staphylococcus aureus (strain MSSA476).